The following is a 399-amino-acid chain: Delta(12) acyl-lipid conjugase (11E,13E-forming) (399 aa).

The interval 11–30 (RNGGGPKKKMGPGQGLGPGE) is disordered. 2 helical membrane passes run 61–81 (FSYL…ADTY) and 93–113 (LAWP…WGIA). The Histidine box-1 signature appears at 114 to 118 (HDCGH). Residues 126–146 (LVDDVVGFLIHSLVFVPYFSF) form a helical membrane-spanning segment. The Histidine box-2 motif lies at 150–154 (HRRHH). A run of 3 helical transmembrane segments spans residues 188–208 (VFII…FNIS), 232–252 (VLVH…YRIA), and 258–278 (GWLI…VVLI). Positions 325-329 (HVVHH) match the Histidine box-3 motif.

This sequence belongs to the fatty acid desaturase type 1 family. In terms of tissue distribution, expressed in developing seeds, but not in leaves.

It localises to the membrane. The enzyme catalyses a (9Z,12Z)-octadecadienoyl-containing glycerolipid + 2 Fe(II)-[cytochrome b5] + O2 + 2 H(+) = a (9Z,11E,13E)-octadecatrienoyl-containing glycerolipid + 2 Fe(III)-[cytochrome b5] + 2 H2O. It carries out the reaction (9Z,12Z,15Z)-octadecatrienoyl-containing glycerolipid + 2 Fe(II)-[cytochrome b5] + O2 + 2 H(+) = a (9Z,11E,13E,15Z)-octadecatetraenoyl-containing glycerolipid + 2 Fe(III)-[cytochrome b5] + 2 H2O. Its pathway is lipid metabolism; polyunsaturated fatty acid biosynthesis. Its function is as follows. Converts linoleic acid to alpha-eleostearic acid (18:3(9Z,11E,13E)) and alpha-linolenic acid to alpha-parinaric acid (18:4(9Z,11E, 13E, 15Z)). Converts a single cis double bond at carbon 12 to two conjugated trans bonds at positions 11 and 13. The protein is Delta(12) acyl-lipid conjugase (11E,13E-forming) of Momordica charantia (Bitter gourd).